We begin with the raw amino-acid sequence, 220 residues long: Deoxyribose-phosphate aldolase 2 (220 aa).

Residue Asp89 is the Proton donor/acceptor of the active site. The active-site Schiff-base intermediate with acetaldehyde is Lys151. Catalysis depends on Lys180, which acts as the Proton donor/acceptor.

It belongs to the DeoC/FbaB aldolase family. DeoC type 1 subfamily.

The protein resides in the cytoplasm. The catalysed reaction is 2-deoxy-D-ribose 5-phosphate = D-glyceraldehyde 3-phosphate + acetaldehyde. The protein operates within carbohydrate degradation; 2-deoxy-D-ribose 1-phosphate degradation; D-glyceraldehyde 3-phosphate and acetaldehyde from 2-deoxy-alpha-D-ribose 1-phosphate: step 2/2. In terms of biological role, catalyzes a reversible aldol reaction between acetaldehyde and D-glyceraldehyde 3-phosphate to generate 2-deoxy-D-ribose 5-phosphate. The polypeptide is Deoxyribose-phosphate aldolase 2 (Staphylococcus aureus (strain MSSA476)).